A 228-amino-acid chain; its full sequence is Small ribosomal subunit protein uS7m (228 aa).

Residues 1–33 (MAASVRHLLKPWTPSLCLMRWSRYNPYYLDPEP) constitute a mitochondrion transit peptide.

This sequence belongs to the universal ribosomal protein uS7 family. In terms of assembly, component of the mitochondrial ribosome small subunit (28S) which comprises a 12S rRNA and about 30 distinct proteins.

The protein localises to the mitochondrion. The chain is Small ribosomal subunit protein uS7m (mrps7) from Danio rerio (Zebrafish).